Consider the following 763-residue polypeptide: MDTLFVEEVAASLIREFLSRKGLKKTYVTMDQERPRSDLSINSRNDLRKVLHLEFLYKENKAKENPLKTNLELITRYFLDHFGNIGNNVTQETRIPELSVPKKSNKLPLRSSETTLVNIYHLADEDETWRTSLSEISKARHDSLDGDVLGHFVSSKRSSHKSRPIKTVAGESPTVASAWEKTDKLPMSEPSLDTKRMGEKVRPKSGLIVRGMMAGPIASSPQDSLRKRSLRRSPALSSATQPHKEGSPQEPELSTHTSTCPTPLEGPASSTASTSRSPQGPLSELTWEKQRTSPGSPPHLPGKGLLPRGSGRWRDLSEDSPAVDSGSEAIRTPPKFSLSSGNVPKTQERPERAFERQGSQPASLRKNQLSVSNKLEGDLDVLQLEDVEDELVREEIILSPVSSVLKLQVVSKPIDLSVAKDIKTILFGSSFCCFSDEWKLQSFSFNDSVSLKYGIVQNKGGPCGVLAAVQGCVLQKLLFEGDSSADCARLQPSNARRTHCLALAIADIVWRAGGCERAVVTLASGTQHFSPTGKYKADGVLETLILHSLTCYEELVTFLQQSIHQFEAGPYGCVLLTLSAILSRSTELVRQDFDVPTSHLIGAHGYCTQELVNLLLTGKAVSNVFNDVVELDSGNGDVTLLKGISTRSDIGFLSLFEHYNVCQVGCFLKTPRFPIWVVCSESHFSVLFSQQLELLRDWRAERLFDLYYYDGLANQQEQIRLTVDTTQTVPEDRDNGLVPPLELCNRTKWKGASVNWNGSEPIL.

A Phosphoserine modification is found at Ser-143. The segment at 154-368 is disordered; that stretch reads SSKRSSHKSR…SQPASLRKNQ (215 aa). Positions 180-202 are enriched in basic and acidic residues; it reads EKTDKLPMSEPSLDTKRMGEKVR. Phosphoserine is present on residues Ser-220 and Ser-224. Positions 252-261 are enriched in polar residues; it reads ELSTHTSTCP. The span at 267–278 shows a compositional bias: low complexity; the sequence is PASSTASTSRSP. Residue Ser-296 is modified to Phosphoserine. Basic and acidic residues predominate over residues 346–355; sequence TQERPERAFE. The span at 357-368 shows a compositional bias: polar residues; the sequence is QGSQPASLRKNQ. Cys-463 acts as the Nucleophile in catalysis. His-683 acts as the Proton acceptor in catalysis.

It belongs to the MINDY deubiquitinase family. FAM188 subfamily.

It carries out the reaction Thiol-dependent hydrolysis of ester, thioester, amide, peptide and isopeptide bonds formed by the C-terminal Gly of ubiquitin (a 76-residue protein attached to proteins as an intracellular targeting signal).. Its function is as follows. Probable hydrolase that can remove 'Lys-48'-linked conjugated ubiquitin from proteins. In Bos taurus (Bovine), this protein is Probable ubiquitin carboxyl-terminal hydrolase MINDY-4 (MINDY4).